The sequence spans 486 residues: Sensor protein PhoQ (486 aa).

The Cytoplasmic portion of the chain corresponds to 1 to 16 (MKKLLRLFFPLSLRVR). A helical membrane pass occupies residues 17–37 (FLLATAAVVLVLSLAYGMVAL). The Periplasmic segment spans residues 38–194 (IGYSVSFDKT…LKSSYMVWSW (157 aa)). A divalent metal cation is bound by residues D151 and D152. Residues 195–215 (FIYVLSANLLLVIPLLWVAAW) form a helical membrane-spanning segment. The HAMP domain occupies 215–266 (WWSLRPIEALAKEVRELEEHNRELLNPATTRELTSLVRNLNRLLKSERERYD). Residues 216-486 (WSLRPIEALA…GRQHSAPKDE (271 aa)) are Cytoplasmic-facing. A Histidine kinase domain is found at 274–480 (DLTHSLKTPL…RMEVIFGRQH (207 aa)). H277 carries the post-translational modification Phosphohistidine; by autocatalysis. N385 contacts Mg(2+). ATP-binding positions include 385–393 (NVLDNACKY), 415–420 (DDGPGI), and 434–446 (RVDTLRPGQGVGL). Residue Q442 participates in Mg(2+) binding.

As to quaternary structure, homodimer; probably dimerizes via the cytoplasmic domain. Probably interacts with MgrB in the periplasm, altering its activity and that of downstream effector PhoP.

The protein localises to the cell inner membrane. The enzyme catalyses ATP + protein L-histidine = ADP + protein N-phospho-L-histidine.. Its activity is regulated as follows. Acetyl-CoA acts as a non-competitive inhibitor of the PhoQ autokinase activity. Feedback inhibited by MgrB, which seems to bind PhoQ, altering its activity and that of downstream effector PhoP. In terms of biological role, member of the two-component regulatory system PhoP/PhoQ involved in adaptation to low Mg(2+) environments and the control of acid resistance genes. In low periplasmic Mg(2+), PhoQ functions as a membrane-associated protein kinase that undergoes autophosphorylation and subsequently transfers the phosphate to PhoP, resulting in the expression of PhoP-activated genes (PAG) and repression of PhoP-repressed genes (PRG). In high periplasmic Mg(2+), acts as a protein phosphatase that dephosphorylates phospho-PhoP, resulting in the repression of PAG and may lead to expression of some PRG. PhoP-regulated transcription is redox-sensitive, being activated when the periplasm becomes more reducing (deletion of dsbA/dsbB, or treatment with dithiothreitol). MgrB acts between DsbA/DsbB and PhoP/PhoQ in this pathway; the 2 periplasmic Cys residues of MgrB are required for its action on PhoQ, which then acts on PhoP. Mediates magnesium influx to the cytosol by activation of mgtA. Promotes expression of the two-component regulatory system rstA/rstB and transcription of the hemL, mgrB, nagA, slyB, vboR and yrbL genes. The sequence is that of Sensor protein PhoQ (phoQ) from Escherichia coli (strain K12).